A 104-amino-acid chain; its full sequence is Flagellar hook-basal body complex protein FliE (104 aa).

The protein belongs to the FliE family.

The protein localises to the bacterial flagellum basal body. The sequence is that of Flagellar hook-basal body complex protein FliE from Escherichia coli O6:K15:H31 (strain 536 / UPEC).